The following is a 99-amino-acid chain: NADH-quinone oxidoreductase subunit K (99 aa).

3 helical membrane passes run 3-23 (PDNYLYLAALIFTIGAAGVML), 28-48 (IVVFMSVELMLNAANLAFVTF), and 59-79 (VIAFFTMVVAATEVVVGLGII).

The protein belongs to the complex I subunit 4L family. NDH-1 is composed of 14 different subunits. Subunits NuoA, H, J, K, L, M, N constitute the membrane sector of the complex.

The protein resides in the cell membrane. It carries out the reaction a quinone + NADH + 5 H(+)(in) = a quinol + NAD(+) + 4 H(+)(out). Its function is as follows. NDH-1 shuttles electrons from NADH, via FMN and iron-sulfur (Fe-S) centers, to quinones in the respiratory chain. The immediate electron acceptor for the enzyme in this species is believed to be a menaquinone. Couples the redox reaction to proton translocation (for every two electrons transferred, four hydrogen ions are translocated across the cytoplasmic membrane), and thus conserves the redox energy in a proton gradient. The chain is NADH-quinone oxidoreductase subunit K from Mycobacteroides abscessus (strain ATCC 19977 / DSM 44196 / CCUG 20993 / CIP 104536 / JCM 13569 / NCTC 13031 / TMC 1543 / L948) (Mycobacterium abscessus).